The primary structure comprises 493 residues: Transcript termination protein A18 (493 aa).

Positions 100-256 (MIELKRPLYI…NSIINIAKLS (157 aa)) constitute a Helicase ATP-binding domain. Residue 113 to 120 (LACGFGKT) coordinates ATP. Residues 206–209 (DESH) carry the DESH box motif.

This sequence belongs to the helicase family. Poxviruses subfamily. As to quaternary structure, interacts with G2. Might be part of a transcription complex composed at least of G2, A18, and H5.

It localises to the virion. Functionally, DNA helicase which seems to act as a postreplicative transcription termination factor. Involved in ATP-dependent release of nascent RNA. Forms a stable complex with single-stranded DNA, and to a lesser extent RNA. In Camelus, this protein is Transcript termination protein A18.